We begin with the raw amino-acid sequence, 354 residues long: Probable cinnamyl alcohol dehydrogenase 1 (354 aa).

Cys-47 lines the Zn(2+) pocket. Ser-49 serves as a coordination point for NADP(+). Zn(2+) is bound by residues His-69, Glu-70, Cys-100, Cys-103, Cys-106, Cys-114, and Cys-163. Residues Thr-167, 188–193 (GLGGVG), 211–216 (SSSDKK), Thr-251, Gly-275, and 296–298 (SFI) each bind NADP(+).

Belongs to the zinc-containing alcohol dehydrogenase family. In terms of assembly, homodimer. Zn(2+) serves as cofactor.

It catalyses the reaction (E)-cinnamyl alcohol + NADP(+) = (E)-cinnamaldehyde + NADPH + H(+). It carries out the reaction (E)-coniferol + NADP(+) = (E)-coniferaldehyde + NADPH + H(+). The enzyme catalyses (E)-sinapyl alcohol + NADP(+) = (E)-sinapaldehyde + NADPH + H(+). The catalysed reaction is (E)-4-coumaroyl alcohol + NADP(+) = (E)-4-coumaraldehyde + NADPH + H(+). It catalyses the reaction (E)-caffeyl alcohol + NADP(+) = (E)-caffeyl aldehyde + NADPH + H(+). It participates in aromatic compound metabolism; phenylpropanoid biosynthesis. In terms of biological role, involved in lignin biosynthesis. Catalyzes the final step specific for the production of lignin monomers. Catalyzes the NADPH-dependent reduction of coniferaldehyde, 5-hydroxyconiferaldehyde, sinapaldehyde, 4-coumaraldehyde and caffeyl aldehyde to their respective alcohols. The sequence is that of Probable cinnamyl alcohol dehydrogenase 1 (CAD1) from Eucalyptus gunnii (Cider gum).